Here is a 221-residue protein sequence, read N- to C-terminus: MKDYQREFIEFAIEKQVLRFGEFTLKSGRVSPYFFNAGMFKTGGDLARLGRFYAATLMDAKIDFDLVFGPAYKGIPIATTTTVALYDHHNVDVPYCFNRKEAKTHGEGGSLVGAELEGKIMLVDDVITAGTAIRESMEIIKAHGAQLSGVLIALDRQEKGQGQLSAIQEVERDFGTQVAAIVTLGDVVTYLEEKLEGKVANQPELAENLASIKKYRLNYGI.

Residue Lys26 coordinates 5-phospho-alpha-D-ribose 1-diphosphate. Residue 34–35 (FF) coordinates orotate. 5-phospho-alpha-D-ribose 1-diphosphate is bound by residues 72 to 73 (YK), Arg99, Lys100, Lys103, His105, and 124 to 132 (DDVITAGTA). Orotate-binding residues include Thr128 and Arg156.

This sequence belongs to the purine/pyrimidine phosphoribosyltransferase family. PyrE subfamily. Homodimer. Requires Mg(2+) as cofactor.

It catalyses the reaction orotidine 5'-phosphate + diphosphate = orotate + 5-phospho-alpha-D-ribose 1-diphosphate. It participates in pyrimidine metabolism; UMP biosynthesis via de novo pathway; UMP from orotate: step 1/2. In terms of biological role, catalyzes the transfer of a ribosyl phosphate group from 5-phosphoribose 1-diphosphate to orotate, leading to the formation of orotidine monophosphate (OMP). In Colwellia psychrerythraea (strain 34H / ATCC BAA-681) (Vibrio psychroerythus), this protein is Orotate phosphoribosyltransferase.